A 400-amino-acid polypeptide reads, in one-letter code: Putative C-type lectin domain family 20 member A (400 aa).

The first 20 residues, 1–20 (MLPRALLLSFCAAALQLVSS), serve as a signal peptide directing secretion. 2 consecutive C-type lectin domains span residues 26–131 (LVKE…FLCY) and 159–275 (ISGQ…FFCF). Intrachain disulfides connect C40–C130, C105–C122, C180–C274, and C248–C266. Positions 287 to 346 (ELPPLFHTSPTEMTEETTPRPGRAVASVGSGTDRRDTAAATEAQHLSSESKEKTSAQKSG) are disordered.

The protein is Putative C-type lectin domain family 20 member A of Homo sapiens (Human).